The chain runs to 437 residues: Ribulose bisphosphate carboxylase/oxygenase activase, chloroplastic (437 aa).

Residues 1–10 (MATAVSTIGS) are compositionally biased toward polar residues. Residues 1–26 (MATAVSTIGSVNRAPPNLNGSSSSAS) form a disordered region. Position 165–172 (165–172 (GGKGQGKS)) interacts with ATP.

This sequence belongs to the RuBisCO activase family.

The protein resides in the plastid. The protein localises to the chloroplast stroma. Activation of RuBisCO (ribulose-1,5-bisphosphate carboxylase/oxygenase; EC 4.1.1.39) involves the ATP-dependent carboxylation of the epsilon-amino group of lysine leading to a carbamate structure. This chain is Ribulose bisphosphate carboxylase/oxygenase activase, chloroplastic (RCA), found in Malus domestica (Apple).